A 341-amino-acid chain; its full sequence is Putative MAGE domain-containing protein MAGEA13P (341 aa).

Disordered regions lie at residues 1–21 (MPHS…APKE) and 78–101 (KATP…GASQ). Residues 87–97 (ESSRSQEKKDP) show a composition bias toward basic and acidic residues. The MAGE domain occupies 105-304 (LEKKVDELVK…SSFPLLYEEA (200 aa)).

The protein is Putative MAGE domain-containing protein MAGEA13P (MAGEA13P) of Homo sapiens (Human).